The following is a 1269-amino-acid chain: Phospholipase D A (1269 aa).

Over residues 55-64 the composition is skewed to polar residues; the sequence is YTSVGSAPTT. The disordered stretch occupies residues 55-121; sequence YTSVGSAPTT…NNNLQSPTQS (67 aa). Low complexity-rich tracts occupy residues 65–87 and 95–114; these read NNNS…SGSS and NSNK…NNNN. Residues 131 to 192 are a coiled coil; sequence SKALHDFEEK…ELKSLDELLH (62 aa). Polar residues predominate over residues 222–232; sequence NSVTNNTPSSA. Disordered regions lie at residues 222-269 and 300-320; these read NSVT…SSST and NSYP…DPNL. Over residues 233-269 the composition is skewed to low complexity; it reads TPLTLSNNNNYTSSSLATSPTTNSSSSSSSSSSSSST. PLD phosphodiesterase domains follow at residues 435 to 462 and 704 to 731; these read IYWS…CFGR and EQIY…NDRS. Catalysis depends on residues His-440, Lys-442, Asp-447, His-709, Lys-711, and Asp-716. Residues 803-835 are a coiled coil; the sequence is NNNNNSNINNNINNNNNEINNNNNNNNNNNSNE. Composition is skewed to low complexity over residues 810–850, 859–906, and 934–943; these read INNN…NSNS, NLPP…GTTN, and SSPQDSPQDS. 2 disordered regions span residues 810-966 and 983-1007; these read INNN…HQSP and SNEQ…TTTD. The span at 987 to 1003 shows a compositional bias: pro residues; it reads LPPPPSSTTPPPPPPPL. A coiled-coil region spans residues 1059–1096; it reads TTAQQQQQQQQQQQQQQQQQQQQQQQQQQQQQQQQQQQ. The disordered stretch occupies residues 1116-1167; that stretch reads IKKKRSSISPSTSSNKLLLSGNGSGDSIRVVTDSGSSPRGQPRSMSSLHDHA. Residues 1122–1142 are compositionally biased toward low complexity; it reads SISPSTSSNKLLLSGNGSGDS. Over residues 1148–1162 the composition is skewed to polar residues; that stretch reads DSGSSPRGQPRSMSS.

The protein belongs to the phospholipase D family.

The enzyme catalyses a 1,2-diacyl-sn-glycero-3-phosphocholine + H2O = a 1,2-diacyl-sn-glycero-3-phosphate + choline + H(+). Its activity is regulated as follows. Inhibited by butan-1-ol. Functionally, plays a role in cell growth. Hydrolyzes membrane phospholipids, such as PtdCho free headgroup and PtdOH (phosphatidic acid; signaling molecule on its own). Involved in the inhibition of actin-based motility and endocytosis. Its inhibition causes complete collapse of F-actin organization. The chain is Phospholipase D A (pldA) from Dictyostelium discoideum (Social amoeba).